The sequence spans 102 residues: Transcription factor UPBEAT1 (102 aa).

One can recognise a bHLH domain in the interval 32–82 (IRPRKSVEASRRPCRAIHRRVKTLKELVPNTKTSEGLDGLFRQTADYILAL).

As to quaternary structure, homodimer. As to expression, expressed in the root vascular tissue and in root hairs and lateral root caps. Detected at the protein level in all cell files in the elongation zone.

It localises to the nucleus. In terms of biological role, transcription factor that modulates the balance between cellular proliferation and differentiation in root growth. Does not act through cytokinin and auxin signaling, but by repressing peroxidase expression in the elongation zone. The polypeptide is Transcription factor UPBEAT1 (UPB1) (Arabidopsis thaliana (Mouse-ear cress)).